Reading from the N-terminus, the 227-residue chain is Ribose-5-phosphate isomerase A (227 aa).

Substrate-binding positions include 28–31 (TGST), 81–84 (DGAD), and 94–97 (KGGG). Glutamate 103 (proton acceptor) is an active-site residue. Lysine 121 serves as a coordination point for substrate.

The protein belongs to the ribose 5-phosphate isomerase family. As to quaternary structure, homodimer.

The enzyme catalyses aldehydo-D-ribose 5-phosphate = D-ribulose 5-phosphate. Its pathway is carbohydrate degradation; pentose phosphate pathway; D-ribose 5-phosphate from D-ribulose 5-phosphate (non-oxidative stage): step 1/1. Functionally, catalyzes the reversible conversion of ribose-5-phosphate to ribulose 5-phosphate. The polypeptide is Ribose-5-phosphate isomerase A (Caulobacter vibrioides (strain ATCC 19089 / CIP 103742 / CB 15) (Caulobacter crescentus)).